A 289-amino-acid polypeptide reads, in one-letter code: Rhodopsin (289 aa).

Topologically, residues 1 to 7 are extracellular; the sequence is YLVSPAA. Residues 8 to 32 form a helical membrane-spanning segment; sequence YAALGAYMFLLILVGFPVNFLTLYV. The Cytoplasmic segment spans residues 33-44; sequence TLDHKKLRTPLN. The helical transmembrane segment at 45-67 threads the bilayer; sequence YILLNLAVADLFMVLGGFTTTMY. Topologically, residues 68-81 are extracellular; it reads TSMHGYFVLGRLGC. Cys-81 and Cys-158 are joined by a disulfide. Residues 82-104 traverse the membrane as a helical segment; it reads NLEGFFATLGGEIALWSLVVLAI. The 'Ionic lock' involved in activated form stabilization motif lies at 105-107; that stretch reads ERW. At 105-123 the chain is on the cytoplasmic side; that stretch reads ERWIVVCKPISNFRFTEDH. A helical membrane pass occupies residues 124-144; it reads AIMGLAFSWVMALTCAVPPLV. Over 145–173 the chain is Extracellular; the sequence is GWSRYIPEGMQCSCGVDYYTRAEGFNTES. A helical transmembrane segment spans residues 174–195; the sequence is FVLYMFTVHFLIPLSVIFFCYG. Residues 196–223 are Cytoplasmic-facing; the sequence is RLLCAVKEAAAAQQESETTQRAEKEVSR. A helical transmembrane segment spans residues 224–245; that stretch reads MVVLMVIGFLVCWLPYASVAWW. Residues 246-257 are Extracellular-facing; sequence IFCNQGSEFGPI. Residues 258–279 form a helical membrane-spanning segment; it reads FMTLPAFFAKTSAIYNPLIYIC. Lys-267 carries the post-translational modification N6-(retinylidene)lysine. Topologically, residues 280–289 are cytoplasmic; that stretch reads MNKQFRHCMI.

The protein belongs to the G-protein coupled receptor 1 family. Opsin subfamily. Phosphorylated on some or all of the serine and threonine residues present in the C-terminal region. In terms of processing, contains one covalently linked retinal chromophore.

The protein localises to the membrane. It is found in the cell projection. The protein resides in the cilium. Its subcellular location is the photoreceptor outer segment. Its function is as follows. Photoreceptor required for image-forming vision at low light intensity. While most salt water fish species use retinal as chromophore, most freshwater fish use 3-dehydroretinal, or a mixture of retinal and 3-dehydroretinal. Light-induced isomerization of 11-cis to all-trans retinal triggers a conformational change that activates signaling via G-proteins. Subsequent receptor phosphorylation mediates displacement of the bound G-protein alpha subunit by arrestin and terminates signaling. The polypeptide is Rhodopsin (rho) (Procottus jeittelesii (Red sculpin)).